The chain runs to 181 residues: Large ribosomal subunit protein eL18 (181 aa).

Residues Trp152 to Lys181 are disordered. Residues Ser169 to Lys181 show a composition bias toward basic and acidic residues.

This sequence belongs to the eukaryotic ribosomal protein eL18 family.

Its subcellular location is the cytoplasm. The sequence is that of Large ribosomal subunit protein eL18 (RPL18) from Tetrahymena thermophila.